The chain runs to 333 residues: Transcription initiation factor IIB (333 aa).

The segment at 33 to 64 (EIYRCPICGNDRFVYNYERGEVVCIVCGAVVQ) adopts a TFIIB-type zinc-finger fold. Residues cysteine 37, cysteine 40, cysteine 56, and cysteine 59 each contribute to the Zn(2+) site. 2 tandem repeats follow at residues 149-232 (QELE…LREL) and 243-324 (LYIS…ELAK).

The protein belongs to the TFIIB family.

Its function is as follows. Stabilizes TBP binding to an archaeal box-A promoter. Also responsible for recruiting RNA polymerase II to the pre-initiation complex (DNA-TBP-TFIIB). The polypeptide is Transcription initiation factor IIB (Pyrobaculum arsenaticum (strain DSM 13514 / JCM 11321 / PZ6)).